We begin with the raw amino-acid sequence, 466 residues long: MADGTDQKSSNQMWGGRFASGPSAIMEEINASIGFDKKLYAQDIRGSIAHATMLAEKGIISQEDKEKIVHGLNTILSEIEAGTFEFSRKLEDIHMNIEARLATLIGTAAGRLHTARSRNDQVALDFRLWVKEELQKTEGMLTALIAAFLDRAEENADTVMPGFTHLQTAQPVTFGHHCMAYVEMFGRDRARVRHAIEHLDESPIGAAALAGTGYPIDRHMTAKALGFREPTRNSIDTVSDRDFALEFLSIASICATHLSRLAEEIVIWSTPQFGFIRLSDAFSTGSSIMPQKKNPDAAELVRAKTGRINGSLVALLTVMKGLPLAYSKDMQEDKEQVFDSAESLELAIAAMTGMIRDLEVRKDRMRAAAGSGYSTATDLADWLVREAGLPFRDAHHVTGNAVALAEKKGCDLADLSLEELQAIHPDITNGIFDVLSVEASVASRTSFGGTAPSEVRKQIAWWRGRN.

It belongs to the lyase 1 family. Argininosuccinate lyase subfamily.

It localises to the cytoplasm. It carries out the reaction 2-(N(omega)-L-arginino)succinate = fumarate + L-arginine. The protein operates within amino-acid biosynthesis; L-arginine biosynthesis; L-arginine from L-ornithine and carbamoyl phosphate: step 3/3. In Agrobacterium fabrum (strain C58 / ATCC 33970) (Agrobacterium tumefaciens (strain C58)), this protein is Argininosuccinate lyase 1.